We begin with the raw amino-acid sequence, 461 residues long: Glycine--tRNA ligase (461 aa).

R99 and E173 together coordinate substrate. Residues 205–207, 215–220, 289–290, and 333–336 contribute to the ATP site; these read RNE, FRTREF, EL, and GADR. 220–224 lines the substrate pocket; the sequence is FEQME. 329–333 provides a ligand contact to substrate; that stretch reads EPSLG.

The protein belongs to the class-II aminoacyl-tRNA synthetase family. As to quaternary structure, homodimer.

It is found in the cytoplasm. The enzyme catalyses tRNA(Gly) + glycine + ATP = glycyl-tRNA(Gly) + AMP + diphosphate. In terms of biological role, catalyzes the attachment of glycine to tRNA(Gly). This Lysinibacillus sphaericus (strain C3-41) protein is Glycine--tRNA ligase.